We begin with the raw amino-acid sequence, 2488 residues long: PKS-NRPS hybrid synthetase swnK (2488 aa).

An adenylation (A) domain region spans residues 33–422; it reads FEQVADRFPD…GRIDGVVKIR (390 aa). Positions 523–598 constitute a Carrier 1 domain; the sequence is QPTSELEQRI…ALAAYLAGTG (76 aa). Position 558 is an O-(pantetheine 4'-phosphoryl)serine (Ser558). A Ketosynthase family 3 (KS3) domain is found at 616 to 1039; sequence HEDIAIVSMA…GTNAHVIVEE (424 aa). Residues Cys785, His920, and His960 each act as for beta-ketoacyl synthase activity in the active site. Positions 1149–1471 are malonyl-CoA:ACP transacylase (MAT) domain; the sequence is LFTGQGSQLP…SLSELHVRHV (323 aa). A ketoreductase (KR) domain region spans residues 1723–1901; it reads GAVLVTGGLG…ASSVAYGTWA (179 aa). Positions 2002 to 2077 constitute a Carrier 2 domain; sequence SIVLHMVQAT…SLSEFLLCRL (76 aa). Ser2037 is modified (O-(pantetheine 4'-phosphoryl)serine). The tract at residues 2084-2103 is disordered; that stretch reads STSSPSDTDGATPSTPTSAA. The interval 2136–2364 is thioester reductase (TE) domain; the sequence is VTGATGFVGT…VLPVDYLCGT (229 aa).

The protein in the N-terminal section; belongs to the NRP synthetase family.

The catalysed reaction is L-pipecolate + malonyl-CoA + 2 NADPH + 4 H(+) = (8aS)-octahydroindolizin-1-one + CO2 + 2 NADP(+) + CoA + 2 H2O. It carries out the reaction L-pipecolate + malonyl-CoA + 3 NADPH + 5 H(+) = (1R,8aS)-octahydroindolizin-1-ol + CO2 + 3 NADP(+) + CoA + 2 H2O. It catalyses the reaction L-pipecolate + malonyl-CoA + 3 NADPH + 5 H(+) = (1S,8aS)-octahydroindolizin-1-ol + CO2 + 3 NADP(+) + CoA + 2 H2O. Its pathway is mycotoxin biosynthesis. Functionally, PKS-NRPS hybrid synthetase; part of the gene cluster that mediates the biosynthesis of swainsonine (SW), a cytotoxic fungal alkaloid and a potential cancer therapy drug. Swainsonine production occurs via a multibranched pathway and is dispensable for fungal colonization of plants and infection of insect hosts. The first step of swainsonine biosynthesis is the production of the precursor pipecolic acid (PA) via conversion of L-lysine (Lys) to 1-piperideine-6-carboxylate (P6C) by the aminotransferase swnA, the latter being further reduced to PA by the reductase swnR. PA can be converted from lysine by both the SW biosynthetic cluster and the unclustered genes such as lysine cyclodeaminase. The PKS-NRPS hybrid synthetase swnK uptakes and condensates PA and malonyl-CoA with and without skipping of the ketoreductase (KR) domain in order to produce 3 intermediates, 1-oxoindolizidine, (1S)-1-hydroxyindolizin, and (1R)-1-hydroxyindolizine; with the transisomer (1S)-1-hydroxyindolizin being predominant. The terminal thioester reductase (TE) domain of swnK is involved in reduction of the thioester bond to release the intermediate aldehydes. The oxidoreductase swnN could contribute to the reduction of 1-oxoindolizidine to (1S)-1-hydroxyindolizin and (1R)-1-hydroxyindolizine, contributing to the major route of SW production. The dioxygenase swnH2 would be responsible for the oxidization of (1R)-1-hydroxyindolizine into (1R,2S)-1,2-dihydroxyindolizine and of (1S)-1-hydroxyindolizin to yield both (1R,2S)-1,2-dihydroxyindolizine and (1S,2S)-1,2-dihydroxyindolizine. The dioxygenase swnH1 then performs the conversion of the 1,2-dihydroxyindolizine epimers to SW. The polypeptide is PKS-NRPS hybrid synthetase swnK (Metarhizium robertsii (strain ARSEF 23 / ATCC MYA-3075) (Metarhizium anisopliae (strain ARSEF 23))).